Here is a 249-residue protein sequence, read N- to C-terminus: Type III pantothenate kinase (249 aa).

Position 8–15 (8–15) interacts with ATP; it reads DAGNSRLK. Substrate is bound by residues Tyr-95 and 102–105; that span reads GVDR. Asp-104 functions as the Proton acceptor in the catalytic mechanism. Asp-125 provides a ligand contact to K(+). Residue Thr-128 participates in ATP binding. Thr-179 is a binding site for substrate.

It belongs to the type III pantothenate kinase family. In terms of assembly, homodimer. NH4(+) serves as cofactor. K(+) is required as a cofactor.

Its subcellular location is the cytoplasm. The catalysed reaction is (R)-pantothenate + ATP = (R)-4'-phosphopantothenate + ADP + H(+). It participates in cofactor biosynthesis; coenzyme A biosynthesis; CoA from (R)-pantothenate: step 1/5. In terms of biological role, catalyzes the phosphorylation of pantothenate (Pan), the first step in CoA biosynthesis. This is Type III pantothenate kinase from Alkalilimnicola ehrlichii (strain ATCC BAA-1101 / DSM 17681 / MLHE-1).